The chain runs to 111 residues: HTH-type transcriptional regulator SinR (111 aa).

An HTH cro/C1-type domain is found at 6-61 (IKQYRKEKGYSLSELAEKAGVAKSYLSSIERNLQTNPSIQFLEKVSAVLDVSVHTL). Residues 17-36 (LSELAEKAGVAKSYLSSIER) constitute a DNA-binding region (H-T-H motif). The 39-residue stretch at 65–103 (KHETEYDGQLDSEWEKLVRDAMTSGVSKKQFREFLDYQK) folds into the Sin domain.

Homotetramer in the absence of SinI. Heterodimer with SinI. Interaction with SinI disrupts the SinR tetramer and its repressor activity. Interacts with hpr.

Functionally, negative as well as positive regulator of alternate developmental processes that are induced at the end of vegetative growth in response to nutrient depletion. Binds to the alkaline protease (aprE) gene at two sites. Also acts as a repressor of the key sporulation gene spo0A. Negatively regulates transcription of the eps operon, which is responsible for the biosynthesis of an exopolysaccharide involved in biofilm formation; therefore it could govern the transition between a state in which bacteria swim or swarm and a state in which bacteria assemble into multicellular communities. Acts with Hpr as a corepressor of epr expression. Also negatively regulates transcription of the lutABC operon, which is required for lactate utilization. Repressor activity is regulated by SinI. This Bacillus subtilis (strain 168) protein is HTH-type transcriptional regulator SinR (sinR).